The sequence spans 436 residues: Repulsive guidance molecule B (436 aa).

Positions 1 to 48 (MGVRAAPSCAAAPAAAGAEQSRRPGLWPPSPPPPLLLLLLLSLGLLHA) are cleaved as a signal peptide. A glycan (N-linked (GlcNAc...) asparagine) is linked at N123. 2 cysteine pairs are disulfide-bonded: C142-C229 and C166-C315. An N-linked (GlcNAc...) asparagine glycan is attached at N386. C415 carries the GPI-anchor amidated cysteine lipid modification. Positions 416–436 (GGCRDLPVGLGLTCLILIMFL) are cleaved as a propeptide — removed in mature form.

It belongs to the repulsive guidance molecule (RGM) family. As to quaternary structure, homooligomer. Interacts with DRGX. Interacts with BMP2 and BMP4. Interacts with the BMP type I receptors ACVR1, BMPR1A and BMPR1B and with the BMP type II receptor ACVR2B. The functional complex with its receptor NEO1/neogenin appears to be a heterotetramer with a 2:2 stoichiometry, RGM molecules acting as staples that bring two NEO1 receptors together without interacting themselves, this arrangement leads to activation of downstream signaling via RhoA. In terms of processing, GPI-anchored. Autocatalytically cleaved at low pH; the two chains remain linked via two disulfide bonds. In terms of tissue distribution, detected in neonatal and adult dorsal root ganglion sensory neurons, spinal cord, and brain (at protein level). Also expressed at high levels in retinal ganglion cells of developing mouse, extending to the optic nerve (at protein level). Expressed in testis, epididymis, ovary, uterus, and pituitary.

The protein resides in the cell membrane. Its subcellular location is the membrane raft. Member of the repulsive guidance molecule (RGM) family that contributes to the patterning of the developing nervous system. Acts as a bone morphogenetic protein (BMP) coreceptor that potentiates BMP signaling. Promotes neuronal adhesion. May inhibit neurite outgrowth. The sequence is that of Repulsive guidance molecule B from Mus musculus (Mouse).